The chain runs to 98 residues: Large ribosomal subunit protein uL23 (98 aa).

This sequence belongs to the universal ribosomal protein uL23 family. In terms of assembly, part of the 50S ribosomal subunit. Contacts protein L29, and trigger factor when it is bound to the ribosome.

Its function is as follows. One of the early assembly proteins it binds 23S rRNA. One of the proteins that surrounds the polypeptide exit tunnel on the outside of the ribosome. Forms the main docking site for trigger factor binding to the ribosome. The chain is Large ribosomal subunit protein uL23 from Ruegeria pomeroyi (strain ATCC 700808 / DSM 15171 / DSS-3) (Silicibacter pomeroyi).